A 425-amino-acid polypeptide reads, in one-letter code: Serine--tRNA ligase (425 aa).

231-233 contacts L-serine; sequence TAE. Residue 262 to 264 coordinates ATP; that stretch reads RSE. Residue Glu285 participates in L-serine binding. 349–352 serves as a coordination point for ATP; that stretch reads EISS. Ser385 is an L-serine binding site.

The protein belongs to the class-II aminoacyl-tRNA synthetase family. Type-1 seryl-tRNA synthetase subfamily. As to quaternary structure, homodimer. The tRNA molecule binds across the dimer.

Its subcellular location is the cytoplasm. It catalyses the reaction tRNA(Ser) + L-serine + ATP = L-seryl-tRNA(Ser) + AMP + diphosphate + H(+). It carries out the reaction tRNA(Sec) + L-serine + ATP = L-seryl-tRNA(Sec) + AMP + diphosphate + H(+). It participates in aminoacyl-tRNA biosynthesis; selenocysteinyl-tRNA(Sec) biosynthesis; L-seryl-tRNA(Sec) from L-serine and tRNA(Sec): step 1/1. Catalyzes the attachment of serine to tRNA(Ser). Is also able to aminoacylate tRNA(Sec) with serine, to form the misacylated tRNA L-seryl-tRNA(Sec), which will be further converted into selenocysteinyl-tRNA(Sec). This Bacillus licheniformis (strain ATCC 14580 / DSM 13 / JCM 2505 / CCUG 7422 / NBRC 12200 / NCIMB 9375 / NCTC 10341 / NRRL NRS-1264 / Gibson 46) protein is Serine--tRNA ligase.